We begin with the raw amino-acid sequence, 177 residues long: Large ribosomal subunit protein uL6 (177 aa).

The protein belongs to the universal ribosomal protein uL6 family. As to quaternary structure, part of the 50S ribosomal subunit.

Functionally, this protein binds to the 23S rRNA, and is important in its secondary structure. It is located near the subunit interface in the base of the L7/L12 stalk, and near the tRNA binding site of the peptidyltransferase center. This Bordetella bronchiseptica (strain ATCC BAA-588 / NCTC 13252 / RB50) (Alcaligenes bronchisepticus) protein is Large ribosomal subunit protein uL6.